We begin with the raw amino-acid sequence, 112 residues long: Large ribosomal subunit protein eL33w (112 aa).

Belongs to the eukaryotic ribosomal protein eL33 family.

This is Large ribosomal subunit protein eL33w (RPL35AA) from Arabidopsis thaliana (Mouse-ear cress).